The primary structure comprises 128 residues: UPF0102 protein PSPTO_4420 (128 aa).

It belongs to the UPF0102 family.

In Pseudomonas syringae pv. tomato (strain ATCC BAA-871 / DC3000), this protein is UPF0102 protein PSPTO_4420.